We begin with the raw amino-acid sequence, 350 residues long: Biotin synthase (350 aa).

The Radical SAM core domain maps to 38-256; it reads NHVQVSTLLS…IAVARIMMPK (219 aa). Residues Cys53, Cys57, and Cys60 each coordinate [4Fe-4S] cluster. Residues Cys97, Cys128, Cys188, and Arg260 each coordinate [2Fe-2S] cluster.

The protein belongs to the radical SAM superfamily. Biotin synthase family. In terms of assembly, homodimer. It depends on [4Fe-4S] cluster as a cofactor. [2Fe-2S] cluster is required as a cofactor.

It catalyses the reaction (4R,5S)-dethiobiotin + (sulfur carrier)-SH + 2 reduced [2Fe-2S]-[ferredoxin] + 2 S-adenosyl-L-methionine = (sulfur carrier)-H + biotin + 2 5'-deoxyadenosine + 2 L-methionine + 2 oxidized [2Fe-2S]-[ferredoxin]. Its pathway is cofactor biosynthesis; biotin biosynthesis; biotin from 7,8-diaminononanoate: step 2/2. Its function is as follows. Catalyzes the conversion of dethiobiotin (DTB) to biotin by the insertion of a sulfur atom into dethiobiotin via a radical-based mechanism. This Vibrio cholerae serotype O1 (strain ATCC 39541 / Classical Ogawa 395 / O395) protein is Biotin synthase.